Reading from the N-terminus, the 348-residue chain is Centromere protein N-A (348 aa).

It belongs to the CENP-N/CHL4 family.

Its subcellular location is the nucleus. It localises to the chromosome. The protein resides in the centromere. In terms of biological role, probable component of a centromeric complex involved in assembly of kinetochore proteins, mitotic progression and chromosome segregation. The sequence is that of Centromere protein N-A (cenpn-a) from Xenopus laevis (African clawed frog).